The sequence spans 250 residues: Global transcriptional regulator CodY (250 aa).

The GAF domain stretch occupies residues 1–147 (MSTLLEKTRK…GATVVGLEIL (147 aa)). The H-T-H motif DNA-binding region spans 195 to 214 (ASKIADKVGITRSVIVNALR).

Belongs to the CodY family.

The protein resides in the cytoplasm. Its function is as follows. DNA-binding global transcriptional regulator which is involved in the adaptive response to starvation and acts by directly or indirectly controlling the expression of numerous genes in response to nutrient availability. During rapid exponential growth, CodY is highly active and represses genes whose products allow adaptation to nutrient depletion. The sequence is that of Global transcriptional regulator CodY from Thermoanaerobacter sp. (strain X514).